A 1059-amino-acid chain; its full sequence is Microtubule-associated protein 1S (1059 aa).

A necessary for the microtubule-organizing center localization region spans residues 1 to 797 (MAAVAGSGAA…SESLPTLSDS (797 aa)). 2 positions are modified to phosphoserine: Ser-321 and Ser-472. Disordered stretches follow at residues 461–733 (PQDL…ASPH) and 751–942 (VPMA…SATP). 2 stretches are compositionally biased toward basic and acidic residues: residues 466 to 486 (GPGR…KREG) and 494 to 530 (PGQE…KDPK). Residues 547–557 (SVPNLKKTNAQ) are compositionally biased toward polar residues. Ser-582 carries the post-translational modification Phosphoserine. The segment covering 591 to 603 (ASPPSAACGSPAS) has biased composition (low complexity). A Phosphothreonine modification is found at Thr-638. A Phosphoserine modification is found at Ser-640. Residues 642–652 (ESHRSPAEGSE) show a composition bias toward basic and acidic residues. Phosphoserine is present on residues Ser-655 and Ser-657. A necessary for interaction with RASSF1 isoform A and isoform C region spans residues 666–1059 (PDASPTVTTP…DAFPACKVEF (394 aa)). Residues 670–680 (PTVTTPTVTTP) are compositionally biased toward low complexity. The segment at 714-966 (EAGLSLPLRG…GSSAHLVDEE (253 aa)) is necessary for association with microtubules. Phosphoserine is present on residues Ser-731 and Ser-759. The segment covering 759–769 (SPGSSNDSSAR) has biased composition (low complexity). Residues 783–796 (PPTSVSESLPTLSD) show a composition bias toward polar residues. Ser-809 is subject to Phosphoserine. Pro residues predominate over residues 825–836 (PDPLKVPPPLPD). Composition is skewed to low complexity over residues 873–887 (AAAP…AKTK) and 923–936 (TATR…SSRP). The tract at residues 960–1059 (AHLVDEEFFQ…DAFPACKVEF (100 aa)) is necessary for association with actin. The tract at residues 967–991 (FFQRVRALCYVISGQDQRKEEGMRA) is necessary for the mitochondrial aggregation and genome destruction.

This sequence belongs to the MAP1 family. As to quaternary structure, heterodimer of a heavy and a light chain. Interacts with microtubules and actin. Both MAP1S heavy and light chains interact with microtubules. MAP1S light chain interacts with actin. Interacts (via C-terminus) with GAN (via Kelch domains). Interacts with ESR1, LRPPRC, RASSF1 isoform A and isoform C, microtubules and VCY2. Interacts with WDR47 (via N-terminus of light chain). As to expression, expressed in neurons (at protein level). Expressed in spermatocytes, spermatids and spermatozoa. Expressed in the cerebral cortex. Highly expressed in testis. Moderately expressed in the brain, colon, heart, kidney, liver, lung, placenta, small intestine, spleen and stomach. Weakly expressed in muscle.

It is found in the nucleus. It localises to the cytoplasm. Its subcellular location is the cytosol. The protein resides in the cytoskeleton. The protein localises to the spindle. Functionally, microtubule-associated protein that mediates aggregation of mitochondria resulting in cell death and genomic destruction (MAGD). Plays a role in anchoring the microtubule organizing center to the centrosomes. Binds to DNA. Plays a role in apoptosis. Involved in the formation of microtubule bundles. This chain is Microtubule-associated protein 1S (MAP1S), found in Homo sapiens (Human).